Reading from the N-terminus, the 193-residue chain is MASLVAGIDEVGRGCIAGPVIAAAVIFAPGQDTHGLADSKRLRPDRRLVLAGRICSESLAWAVGRAEVSEIDQLNILRATHLAMCRAVAALPVLPDWVRVDGNRYPPLDCPGEAIVGGDASVAEIAAASILAKVFRDREMEVLDRLCPGYALGVHKGYPTRLHIDRLASRGASFFHRRSFAPVRAVIDRSSAS.

The RNase H type-2 domain maps to 3 to 192; the sequence is SLVAGIDEVG…VRAVIDRSSA (190 aa). A divalent metal cation contacts are provided by D9, E10, and D101.

The protein belongs to the RNase HII family. Mn(2+) is required as a cofactor. The cofactor is Mg(2+).

The protein resides in the cytoplasm. The catalysed reaction is Endonucleolytic cleavage to 5'-phosphomonoester.. Its function is as follows. Endonuclease that specifically degrades the RNA of RNA-DNA hybrids. The protein is Ribonuclease HII of Methylococcus capsulatus (strain ATCC 33009 / NCIMB 11132 / Bath).